The primary structure comprises 371 residues: Putative ribonuclease 3 (371 aa).

Residues 10–136 enclose the RNase III domain; it reads AKSVKDKYIP…FLGAVCMAVD (127 aa).

This sequence belongs to the IIV-6 142R family.

The enzyme catalyses Endonucleolytic cleavage to 5'-phosphomonoester.. In terms of biological role, digests double-stranded RNA. The polypeptide is Putative ribonuclease 3 (Frog virus 3 (isolate Goorha) (FV-3)).